We begin with the raw amino-acid sequence, 81 residues long: Cytotoxin 3b (81 aa).

The N-terminal stretch at 1 to 21 (MKTLLLTLVVVTIVCLDLGYT) is a signal peptide. 4 disulfides stabilise this stretch: C24–C42, C35–C59, C63–C74, and C75–C80.

This sequence belongs to the three-finger toxin family. Short-chain subfamily. Type IA cytotoxin sub-subfamily. Monomer in solution; Homodimer and oligomer in the presence of negatively charged lipids forming a pore with a size ranging between 20 and 30 Angstroms. Expressed by the venom gland.

It localises to the secreted. The protein localises to the target cell membrane. Functionally, shows cytolytic activity on many different cells by forming pore in lipid membranes. In vivo, increases heart rate or kills the animal by cardiac arrest. In addition, it binds to heparin with high affinity, interacts with Kv channel-interacting protein 1 (KCNIP1) in a calcium-independent manner, and binds to integrin alpha-V/beta-3 (ITGAV/ITGB3) with moderate affinity. The chain is Cytotoxin 3b from Naja atra (Chinese cobra).